We begin with the raw amino-acid sequence, 117 residues long: Ribosome-binding factor A (117 aa).

This sequence belongs to the RbfA family. In terms of assembly, monomer. Binds 30S ribosomal subunits, but not 50S ribosomal subunits or 70S ribosomes.

It localises to the cytoplasm. One of several proteins that assist in the late maturation steps of the functional core of the 30S ribosomal subunit. Associates with free 30S ribosomal subunits (but not with 30S subunits that are part of 70S ribosomes or polysomes). Required for efficient processing of 16S rRNA. May interact with the 5'-terminal helix region of 16S rRNA. This Leuconostoc citreum (strain KM20) protein is Ribosome-binding factor A.